Here is a 372-residue protein sequence, read N- to C-terminus: tRNA-specific 2-thiouridylase MnmA (372 aa).

ATP-binding positions include 16–23 (GMSGGVDS) and Met-42. The segment at 102–104 (NPD) is interaction with target base in tRNA. Cys-107 serves as the catalytic Nucleophile. Cys-107 and Cys-205 are joined by a disulfide. Gly-132 lines the ATP pocket. The interval 155–157 (KDQ) is interaction with tRNA. The active-site Cysteine persulfide intermediate is the Cys-205. The interaction with tRNA stretch occupies residues 317 to 318 (RY).

This sequence belongs to the MnmA/TRMU family.

Its subcellular location is the cytoplasm. The enzyme catalyses S-sulfanyl-L-cysteinyl-[protein] + uridine(34) in tRNA + AH2 + ATP = 2-thiouridine(34) in tRNA + L-cysteinyl-[protein] + A + AMP + diphosphate + H(+). Catalyzes the 2-thiolation of uridine at the wobble position (U34) of tRNA, leading to the formation of s(2)U34. The protein is tRNA-specific 2-thiouridylase MnmA of Shewanella oneidensis (strain ATCC 700550 / JCM 31522 / CIP 106686 / LMG 19005 / NCIMB 14063 / MR-1).